Reading from the N-terminus, the 416-residue chain is Enterobactin exporter EntS (416 aa).

Residues 1 to 21 (MNKQSWLLNLSLLKTHPAFRA) are Cytoplasmic-facing. Residues 22–42 (VFLARFISIVSLGLLGVAVPV) traverse the membrane as a helical segment. Topologically, residues 43 to 55 (QIQMMTHSTWQVG) are periplasmic. The helical transmembrane segment at 56–76 (LSVTLTGGAMFVGLMVGGVLA) threads the bilayer. Residues 77-83 (DRYERKK) lie on the Cytoplasmic side of the membrane. Residues 84 to 104 (VILLARGTCGIGFIGLCLNAL) traverse the membrane as a helical segment. The Periplasmic portion of the chain corresponds to 105–109 (LPEPS). Residues 110 to 130 (LLAIYLLGLWDGFFASLGVTA) form a helical membrane-spanning segment. Over 131 to 156 (LLAATPALVGRENLMQAGAITMLTVR) the chain is Cytoplasmic. Residues 157 to 177 (LGSVISPMIGGLLLATGGVAW) form a helical membrane-spanning segment. Position 178 (Asn178) is a topological domain, periplasmic. The helical transmembrane segment at 179-199 (YGLAAAGTFITLLPLLSLPAL) threads the bilayer. Topologically, residues 200–218 (PPPPQPREHPLKSLLAGFR) are cytoplasmic. A helical membrane pass occupies residues 219–239 (FLLASPLVGGIALLGGLLTMA). Over 240–256 (SAVRVLYPALADNWQMS) the chain is Periplasmic. A helical membrane pass occupies residues 257 to 277 (AAQIGFLYAAIPLGAAIGALT). At 278–287 (SGKLAHSVRP) the chain is on the cytoplasmic side. Residues 288–307 (GLLMLLSTLGAFLAISLFGL) form a helical membrane-spanning segment. Residues 308–313 (MPMWIL) are Periplasmic-facing. Residues 314–336 (GVVCLALFGWLSAVSSLLQYTML) form a helical membrane-spanning segment. Over 337–356 (QTQTPEAMLGRINGLWTAQN) the chain is Cytoplasmic. The chain crosses the membrane as a helical span at residues 357–377 (VTGDAIGAALLGGLGAMMTPV). Ala378 is a topological domain (periplasmic). Residues 379 to 399 (SASASGFGLLIIGVLLLLVLV) traverse the membrane as a helical segment. Residues 400–416 (ELRRFRQTPPQVTASDS) lie on the Cytoplasmic side of the membrane.

The protein belongs to the major facilitator superfamily. EntS (TC 2.A.1.38) family.

It is found in the cell inner membrane. Functionally, component of an export pathway for enterobactin. The sequence is that of Enterobactin exporter EntS from Escherichia coli O45:K1 (strain S88 / ExPEC).